A 405-amino-acid chain; its full sequence is Diaminohydroxyphosphoribosylamino-pyrimidine deaminase (405 aa).

A CMP/dCMP-type deaminase domain is found at Tyr-256–Val-383. His-305 lines the Zn(2+) pocket. The active-site Proton donor is the Glu-307. Zn(2+)-binding residues include Cys-335 and Cys-345.

This sequence belongs to the cytidine and deoxycytidylate deaminase family. Requires Zn(2+) as cofactor.

It is found in the cytoplasm. The protein resides in the nucleus. It carries out the reaction 2,5-diamino-6-hydroxy-4-(5-phosphoribosylamino)-pyrimidine + H2O + H(+) = 5-amino-6-(5-phospho-D-ribosylamino)uracil + NH4(+). It functions in the pathway cofactor biosynthesis; riboflavin biosynthesis; 5-amino-6-(D-ribitylamino)uracil from GTP: step 2/4. Its function is as follows. Involved in riboflavin biosynthesis. Converts 2,5-diamino-6-(ribosylamino)-4(3H)-pyrimidinone 5'-phosphate into 5-amino-6-(ribosylamino)-2,4(1H,3H)-pyrimidinedione 5'-phosphate. The protein is Diaminohydroxyphosphoribosylamino-pyrimidine deaminase of Schizosaccharomyces pombe (strain 972 / ATCC 24843) (Fission yeast).